The sequence spans 145 residues: Hemoglobin subunit beta (145 aa).

The Globin domain maps to 1–145; sequence MLTAEEKAAV…VANALAHRYH (145 aa). Threonine 11 carries the post-translational modification Phosphothreonine. Serine 43 is modified (phosphoserine). Lysine 58 is subject to N6-acetyllysine. Histidine 62 contacts heme b. Position 81 is an N6-acetyllysine (lysine 81). Position 91 (histidine 91) interacts with heme b. Cysteine 92 bears the S-nitrosocysteine mark.

It belongs to the globin family. In terms of assembly, heterotetramer of two alpha chains and two beta chains. In terms of tissue distribution, red blood cells.

Functionally, involved in oxygen transport from the lung to the various peripheral tissues. The protein is Hemoglobin subunit beta (HBB) of Bos gaurus frontalis (Domestic gayal).